We begin with the raw amino-acid sequence, 90 residues long: Phosphoribosyl-ATP pyrophosphatase (90 aa).

This sequence belongs to the PRA-PH family.

Its subcellular location is the cytoplasm. It carries out the reaction 1-(5-phospho-beta-D-ribosyl)-ATP + H2O = 1-(5-phospho-beta-D-ribosyl)-5'-AMP + diphosphate + H(+). It functions in the pathway amino-acid biosynthesis; L-histidine biosynthesis; L-histidine from 5-phospho-alpha-D-ribose 1-diphosphate: step 2/9. This is Phosphoribosyl-ATP pyrophosphatase from Streptomyces griseus subsp. griseus (strain JCM 4626 / CBS 651.72 / NBRC 13350 / KCC S-0626 / ISP 5235).